The primary structure comprises 70 residues: UPF0352 protein Sfri_2492 (70 aa).

This sequence belongs to the UPF0352 family.

The chain is UPF0352 protein Sfri_2492 from Shewanella frigidimarina (strain NCIMB 400).